The sequence spans 209 residues: MNKGYPVTDLVILAGGQARRMNGLNKLLQQFDGDTQLLKIHQKLKSSVSEIWVNSHRDYSIYQSIVPDIKCFQDDASGFFGPLMGMKSAWSHVKADYVLFIPCDVTYIPTQVVAKLHSALRKNKQAQAAYVSINGDALYPFCLLKRESLEVLEQQIDKQQLSLKNCFKLLHAQVAIFQKQNLFFHSINSLDELQQYKQIKAFKEIFSTN.

GTP contacts are provided by residues 13 to 15 (LAG), Lys-26, Asn-54, Asp-74, and Asp-104. Asp-104 is a binding site for Mg(2+).

It belongs to the MobA family. As to quaternary structure, monomer. It depends on Mg(2+) as a cofactor.

It is found in the cytoplasm. It catalyses the reaction Mo-molybdopterin + GTP + H(+) = Mo-molybdopterin guanine dinucleotide + diphosphate. In terms of biological role, transfers a GMP moiety from GTP to Mo-molybdopterin (Mo-MPT) cofactor (Moco or molybdenum cofactor) to form Mo-molybdopterin guanine dinucleotide (Mo-MGD) cofactor. This is Molybdenum cofactor guanylyltransferase from Acinetobacter baumannii (strain ATCC 17978 / DSM 105126 / CIP 53.77 / LMG 1025 / NCDC KC755 / 5377).